The following is a 273-amino-acid chain: Exosporium protein C (273 aa).

It is found in the spore wall. The sequence is that of Exosporium protein C from Clostridium sporogenes (strain ATCC 15579).